The chain runs to 406 residues: Succinylornithine transaminase/acetylornithine aminotransferase (406 aa).

Pyridoxal 5'-phosphate contacts are provided by residues 108–109 and phenylalanine 141; that span reads GA. N(2)-acetyl-L-ornithine is bound at residue arginine 144. 226 to 229 lines the pyridoxal 5'-phosphate pocket; that stretch reads DEVQ. Lysine 255 carries the post-translational modification N6-(pyridoxal phosphate)lysine. Threonine 283 contributes to the N(2)-acetyl-L-ornithine binding site. Residue threonine 284 coordinates pyridoxal 5'-phosphate.

Belongs to the class-III pyridoxal-phosphate-dependent aminotransferase family. ArgD subfamily. As to quaternary structure, homodimer. Requires pyridoxal 5'-phosphate as cofactor.

It is found in the cytoplasm. The catalysed reaction is N(2)-succinyl-L-ornithine + 2-oxoglutarate = N-succinyl-L-glutamate 5-semialdehyde + L-glutamate. The enzyme catalyses N(2)-acetyl-L-ornithine + 2-oxoglutarate = N-acetyl-L-glutamate 5-semialdehyde + L-glutamate. It participates in amino-acid biosynthesis; L-arginine biosynthesis; N(2)-acetyl-L-ornithine from L-glutamate: step 4/4. Its pathway is amino-acid degradation; L-arginine degradation via AST pathway; L-glutamate and succinate from L-arginine: step 3/5. Functionally, transaminates both N(2)-acetylornithine and N(2)-succinylornithine. The sequence is that of Succinylornithine transaminase/acetylornithine aminotransferase (aruC) from Pseudomonas aeruginosa (strain ATCC 15692 / DSM 22644 / CIP 104116 / JCM 14847 / LMG 12228 / 1C / PRS 101 / PAO1).